A 1323-amino-acid polypeptide reads, in one-letter code: MLDVNFFDELRIGLATADDIRRWSRGEVKKPETINYRTLKPEKDGLFCERIFGPTRDWECGCGKYKRVRYKGIICERCGVEVTKSKVRRERMGHIELAAPVTHIWYFKGVPSRLGYLLDLAPKDLEKIIYFAANIITSVDEEGRHNDQSTLEAEMLLEKKEVEQERDAELADRAKTLEDDLAELEAAGAKNDAKKKVQNAADREMRHIRERAEREIDRLDEIWNTFVKLAPKQMIVDENIYNELVDRYEDYFTGGMGAEAIQTLIRSFDLEAEAESLREVIRDGKGQKKLRALKRLKVVAAFLRSGNDPAGMVLDCIPVIPPELRPMVQLDGGRFATSDLNDLYRRVINRNNRLKRMLDLGAPEIIVNNEKRMLQESVDALFDNGRRGRPVTGPGNRPLKSLSDLLKGKQGRFRQNLLGKRVDYSGRSVIIVGPQLKLHQCGLPKLMALELFKPFVMKRLVEKSYAQNIKSAKRMVERQRPEVWDVLEEAIAEHPVMLNRAPTLHRLGIQAFEPILVEGKAIQLHPLACEAFNADFDGDQMAVHLPLSAEAQAEARILMLASNNILSPASGKPLAMPRLDMVTGLYYLTLLKKPEEFGGQGAYAPATEDGPAQGVYSSLAEAIMAYDRGVLGLQAPIHVRISHLRPTAEIEAELFPDGWQRGQTWLAETTLGRVLFNELLPWNYPYVEGVMAKKPQASVINDLAAKYPMITVAQTVDKLKDAGFYWATRSGVTITMHDVLVLPNKQEVLDNYEAKARVIEKKMARGKINEAERYQSLVDLWKEATDYVGQSVEDLYPDDNPIPMIVKSGAAGNMRQIWTLAGMKGMVTNSRGEYITRPIKTSFREGLSVLEYFNNSHGSRKGLADTALRTADSGYLTRRLVDVAQDVIVREDDCGTKQGAVVPVAVPVLDAEGKPTGNYTAADFVETSVLGRYLASDATASDGTVIVAEGDVVGEGELQALLEAGVEEVKVRSVMTCATNTGVCSTCYGRSMATGKKVEIGEAVGIVAAQSIGEPGTQLTMRTFHLGGVGGDITGGLPRVQELFEARVPKAKSPIASVDGKVRIEDDDNFFTLTIEPDDGSDDVVYEKLSKRQGLATLGTGGVERPIRDGDHVKMGQQLLKGAADPHEVLRVMGRRGVQQHLINEVQKVYRDQGVAIHDKHIEIIVRQMLRRVTVIDSGSTEFLPGSLVDHADAVAASKEAVKTGGRPVEVRAEIMGITKASLATESWLSAASFQETTRVLTDAAINKRSDKLIGLKENVIIGKLIPAGTGISRYRNISVEPTEEARAAAYSLPSSFGDGFYADDTYGEFTGAAVPLDDIDLM.

4 residues coordinate Zn(2+): Cys-60, Cys-62, Cys-75, and Cys-78. Positions 535, 537, and 539 each coordinate Mg(2+). 4 residues coordinate Zn(2+): Cys-894, Cys-977, Cys-984, and Cys-987.

The protein belongs to the RNA polymerase beta' chain family. In terms of assembly, the RNAP catalytic core consists of 2 alpha, 1 beta, 1 beta' and 1 omega subunit. When a sigma factor is associated with the core the holoenzyme is formed, which can initiate transcription. Requires Mg(2+) as cofactor. Zn(2+) is required as a cofactor.

The catalysed reaction is RNA(n) + a ribonucleoside 5'-triphosphate = RNA(n+1) + diphosphate. DNA-dependent RNA polymerase catalyzes the transcription of DNA into RNA using the four ribonucleoside triphosphates as substrates. The polypeptide is DNA-directed RNA polymerase subunit beta' (Corynebacterium jeikeium (strain K411)).